A 245-amino-acid chain; its full sequence is Probable phosphatase YPTB2019 (245 aa).

His-7, His-9, His-15, His-40, Glu-73, His-101, His-131, Asp-192, and His-194 together coordinate Zn(2+).

Belongs to the PHP family. Homotrimer. It depends on Zn(2+) as a cofactor.

The chain is Probable phosphatase YPTB2019 from Yersinia pseudotuberculosis serotype I (strain IP32953).